The sequence spans 349 residues: Protein RecA (349 aa).

65-72 (GPESSGKT) lines the ATP pocket.

The protein belongs to the RecA family.

The protein localises to the cytoplasm. Can catalyze the hydrolysis of ATP in the presence of single-stranded DNA, the ATP-dependent uptake of single-stranded DNA by duplex DNA, and the ATP-dependent hybridization of homologous single-stranded DNAs. It interacts with LexA causing its activation and leading to its autocatalytic cleavage. The protein is Protein RecA of Azotobacter vinelandii.